A 341-amino-acid polypeptide reads, in one-letter code: Inactive caspase-12 (341 aa).

In terms of domain architecture, CARD spans 1-92 (MADEKPSNGV…QLSSDISSDG (92 aa)). A phosphoserine mark is found at Ser85 and Ser90. Active-site residues include His172 and Cys220.

This sequence belongs to the peptidase C14A family. As to expression, widely expressed, with highest levels in lung.

Its function is as follows. May function as a negative regulator of inflammatory responses and innate immunity. May reduce cytokine release in response to bacterial lipopolysaccharide during infection. Reduces activation of NF-kappa-B in response to TNF. May lack protease activity. The chain is Inactive caspase-12 (CASP12) from Homo sapiens (Human).